The primary structure comprises 273 residues: Type IV secretion system protein PtlF homolog (273 aa).

Positions Met-1 to Ala-20 are cleaved as a signal peptide.

Belongs to the TrbG/VirB9 family.

The protein localises to the cell outer membrane. This chain is Type IV secretion system protein PtlF homolog (ptlF), found in Bordetella bronchiseptica (strain ATCC BAA-588 / NCTC 13252 / RB50) (Alcaligenes bronchisepticus).